Consider the following 245-residue polypeptide: tRNA (guanine-N(1)-)-methyltransferase (245 aa).

Residues G113 and 133 to 138 (IGDYVL) contribute to the S-adenosyl-L-methionine site.

This sequence belongs to the RNA methyltransferase TrmD family. As to quaternary structure, homodimer.

It is found in the cytoplasm. The catalysed reaction is guanosine(37) in tRNA + S-adenosyl-L-methionine = N(1)-methylguanosine(37) in tRNA + S-adenosyl-L-homocysteine + H(+). Specifically methylates guanosine-37 in various tRNAs. The sequence is that of tRNA (guanine-N(1)-)-methyltransferase from Oceanobacillus iheyensis (strain DSM 14371 / CIP 107618 / JCM 11309 / KCTC 3954 / HTE831).